Consider the following 298-residue polypeptide: Glutamyl-Q tRNA(Asp) synthetase (298 aa).

Residues 9–13 and E45 each bind L-glutamate; that span reads RFAPS. The 'HIGH' region signature appears at 12 to 22; the sequence is PSPSGELHFGS. Residues C101, C103, Y115, and C119 each contribute to the Zn(2+) site. L-glutamate contacts are provided by Y172 and R190. The 'KMSKS' region motif lies at 228–232; the sequence is KLSKQ. K231 serves as a coordination point for ATP.

This sequence belongs to the class-I aminoacyl-tRNA synthetase family. GluQ subfamily. Zn(2+) is required as a cofactor.

In terms of biological role, catalyzes the tRNA-independent activation of glutamate in presence of ATP and the subsequent transfer of glutamate onto a tRNA(Asp). Glutamate is transferred on the 2-amino-5-(4,5-dihydroxy-2-cyclopenten-1-yl) moiety of the queuosine in the wobble position of the QUC anticodon. In Salmonella typhi, this protein is Glutamyl-Q tRNA(Asp) synthetase.